Consider the following 485-residue polypeptide: Membrane-bound lytic murein transglycosylase F (485 aa).

The N-terminal stretch at 1-29 is a signal peptide; sequence MFAHTALRQRCAKWLLATGLFLLLGACVE. The segment at 30–267 is non-LT domain; the sequence is KPSTLERVKE…RLKDRYYGHV (238 aa). The LT domain stretch occupies residues 268–485; the sequence is DVLGYVGAYT…DKPADKSSPM (218 aa). Glutamate 314 is an active-site residue. Positions 465–485 are disordered; that stretch reads EGNLHVPGVNKDKPADKSSPM. The span at 474-485 shows a compositional bias: basic and acidic residues; sequence NKDKPADKSSPM.

The protein in the N-terminal section; belongs to the bacterial solute-binding protein 3 family. This sequence in the C-terminal section; belongs to the transglycosylase Slt family.

The protein localises to the cell outer membrane. It catalyses the reaction Exolytic cleavage of the (1-&gt;4)-beta-glycosidic linkage between N-acetylmuramic acid (MurNAc) and N-acetylglucosamine (GlcNAc) residues in peptidoglycan, from either the reducing or the non-reducing ends of the peptidoglycan chains, with concomitant formation of a 1,6-anhydrobond in the MurNAc residue.. Its function is as follows. Murein-degrading enzyme that degrades murein glycan strands and insoluble, high-molecular weight murein sacculi, with the concomitant formation of a 1,6-anhydromuramoyl product. Lytic transglycosylases (LTs) play an integral role in the metabolism of the peptidoglycan (PG) sacculus. Their lytic action creates space within the PG sacculus to allow for its expansion as well as for the insertion of various structures such as secretion systems and flagella. The chain is Membrane-bound lytic murein transglycosylase F from Pseudomonas putida (strain ATCC 700007 / DSM 6899 / JCM 31910 / BCRC 17059 / LMG 24140 / F1).